The sequence spans 209 residues: Uracil phosphoribosyltransferase (209 aa).

Residues R79, R104, and 131–139 (DPMLATGGS) each bind 5-phospho-alpha-D-ribose 1-diphosphate. Uracil contacts are provided by residues I194 and 199–201 (GDA). D200 contacts 5-phospho-alpha-D-ribose 1-diphosphate.

Belongs to the UPRTase family. The cofactor is Mg(2+).

The enzyme catalyses UMP + diphosphate = 5-phospho-alpha-D-ribose 1-diphosphate + uracil. Its pathway is pyrimidine metabolism; UMP biosynthesis via salvage pathway; UMP from uracil: step 1/1. Its activity is regulated as follows. Allosterically activated by GTP. Functionally, catalyzes the conversion of uracil and 5-phospho-alpha-D-ribose 1-diphosphate (PRPP) to UMP and diphosphate. The protein is Uracil phosphoribosyltransferase of Lactobacillus delbrueckii subsp. bulgaricus (strain ATCC 11842 / DSM 20081 / BCRC 10696 / JCM 1002 / NBRC 13953 / NCIMB 11778 / NCTC 12712 / WDCM 00102 / Lb 14).